A 332-amino-acid chain; its full sequence is Ferredoxin--NADP reductase (332 aa).

7 residues coordinate FAD: glutamate 35, glutamine 43, tyrosine 48, valine 88, phenylalanine 122, aspartate 286, and serine 326.

It belongs to the ferredoxin--NADP reductase type 2 family. In terms of assembly, homodimer. FAD serves as cofactor.

It catalyses the reaction 2 reduced [2Fe-2S]-[ferredoxin] + NADP(+) + H(+) = 2 oxidized [2Fe-2S]-[ferredoxin] + NADPH. This Limosilactobacillus reuteri (strain DSM 20016) (Lactobacillus reuteri) protein is Ferredoxin--NADP reductase.